A 308-amino-acid polypeptide reads, in one-letter code: Methionyl-tRNA formyltransferase (308 aa).

107–110 (SLLP) is a binding site for (6S)-5,6,7,8-tetrahydrofolate.

It belongs to the Fmt family.

The enzyme catalyses L-methionyl-tRNA(fMet) + (6R)-10-formyltetrahydrofolate = N-formyl-L-methionyl-tRNA(fMet) + (6S)-5,6,7,8-tetrahydrofolate + H(+). Attaches a formyl group to the free amino group of methionyl-tRNA(fMet). The formyl group appears to play a dual role in the initiator identity of N-formylmethionyl-tRNA by promoting its recognition by IF2 and preventing the misappropriation of this tRNA by the elongation apparatus. This is Methionyl-tRNA formyltransferase from Carboxydothermus hydrogenoformans (strain ATCC BAA-161 / DSM 6008 / Z-2901).